The primary structure comprises 313 residues: MTQPNEFKHISVLLDECIEALAIKPNGIYIDATFGRGGHSAHILDALGEKGRLIAFDRDPQAIKAAERFADDKRFSIIHSPFGDMAEEIEALGLTGKIDGVLMDLGVSSPQLDDAERGFSFLRDGPLDMRMDTSRGQSAADWLASAEEQDITQVIKEFGEEKFGKRIAHAIVNTRKDTPITRTAQLAKIIDEAVPVKDKFKHPATRAFQGIRIYINAELEQLRVGLKAATQVLAKEGRLAVISFHSLEDRLVKRFIKDQSKGKVVPHNLPITQAEIDADKVLKALGKAIKPSEQEIANNVRSRSSVLRVAEKL.

S-adenosyl-L-methionine is bound by residues 37–39, Asp57, Phe82, Asp104, and Gln111; that span reads GGH.

The protein belongs to the methyltransferase superfamily. RsmH family.

Its subcellular location is the cytoplasm. It catalyses the reaction cytidine(1402) in 16S rRNA + S-adenosyl-L-methionine = N(4)-methylcytidine(1402) in 16S rRNA + S-adenosyl-L-homocysteine + H(+). Specifically methylates the N4 position of cytidine in position 1402 (C1402) of 16S rRNA. This is Ribosomal RNA small subunit methyltransferase H from Alteromonas mediterranea (strain DSM 17117 / CIP 110805 / LMG 28347 / Deep ecotype).